We begin with the raw amino-acid sequence, 159 residues long: Phosphopantetheine adenylyltransferase (159 aa).

Threonine 9 is a substrate binding site. ATP contacts are provided by residues 9 to 10 (TF) and histidine 17. Residues lysine 41, leucine 73, and arginine 87 each contribute to the substrate site. ATP contacts are provided by residues 88 to 90 (GLR), glutamate 98, and 123 to 129 (YAFLSST).

It belongs to the bacterial CoaD family. Homohexamer. Mg(2+) is required as a cofactor.

It localises to the cytoplasm. The enzyme catalyses (R)-4'-phosphopantetheine + ATP + H(+) = 3'-dephospho-CoA + diphosphate. It functions in the pathway cofactor biosynthesis; coenzyme A biosynthesis; CoA from (R)-pantothenate: step 4/5. In terms of biological role, reversibly transfers an adenylyl group from ATP to 4'-phosphopantetheine, yielding dephospho-CoA (dPCoA) and pyrophosphate. The chain is Phosphopantetheine adenylyltransferase from Vibrio campbellii (strain ATCC BAA-1116).